The primary structure comprises 210 residues: dTTP/UTP pyrophosphatase (210 aa).

Residue aspartate 89 is the Proton acceptor of the active site.

This sequence belongs to the Maf family. YhdE subfamily. A divalent metal cation serves as cofactor.

It is found in the cytoplasm. The catalysed reaction is dTTP + H2O = dTMP + diphosphate + H(+). It catalyses the reaction UTP + H2O = UMP + diphosphate + H(+). Nucleoside triphosphate pyrophosphatase that hydrolyzes dTTP and UTP. May have a dual role in cell division arrest and in preventing the incorporation of modified nucleotides into cellular nucleic acids. This chain is dTTP/UTP pyrophosphatase, found in Burkholderia lata (strain ATCC 17760 / DSM 23089 / LMG 22485 / NCIMB 9086 / R18194 / 383).